The sequence spans 691 residues: Elongation factor G 1 (691 aa).

One can recognise a tr-type G domain in the interval 8-282 (ERVRNIGIAA…AVVDYLPAPQ (275 aa)). GTP is bound by residues 17–24 (AHIDAGKT), 81–85 (DTPGH), and 135–138 (NKMD).

Belongs to the TRAFAC class translation factor GTPase superfamily. Classic translation factor GTPase family. EF-G/EF-2 subfamily.

The protein localises to the cytoplasm. Its function is as follows. Catalyzes the GTP-dependent ribosomal translocation step during translation elongation. During this step, the ribosome changes from the pre-translocational (PRE) to the post-translocational (POST) state as the newly formed A-site-bound peptidyl-tRNA and P-site-bound deacylated tRNA move to the P and E sites, respectively. Catalyzes the coordinated movement of the two tRNA molecules, the mRNA and conformational changes in the ribosome. This Trichodesmium erythraeum (strain IMS101) protein is Elongation factor G 1.